Here is a 78-residue protein sequence, read N- to C-terminus: UPF0349 protein BH3414 (78 aa).

Belongs to the UPF0349 family.

This is UPF0349 protein BH3414 from Halalkalibacterium halodurans (strain ATCC BAA-125 / DSM 18197 / FERM 7344 / JCM 9153 / C-125) (Bacillus halodurans).